The sequence spans 464 residues: Protein FAM90A26 (464 aa).

Disordered regions lie at residues 1 to 42, 70 to 293, 312 to 390, and 410 to 442; these read MMAC…DPRL, PPTL…AKRP, PFQI…DGAQ, and AAPS…VRVP. Basic and acidic residues-rich tracts occupy residues 74-83 and 97-114; these read GKKEGKENLK and NKDK…DPQR. Low complexity predominate over residues 178 to 197; it reads SALASLSPLRKASLSSSSSL.

Belongs to the FAM90 family.

In Homo sapiens (Human), this protein is Protein FAM90A26.